The sequence spans 464 residues: Histidine--tRNA ligase (464 aa).

Belongs to the class-II aminoacyl-tRNA synthetase family. Homodimer.

It localises to the cytoplasm. It carries out the reaction tRNA(His) + L-histidine + ATP = L-histidyl-tRNA(His) + AMP + diphosphate + H(+). The sequence is that of Histidine--tRNA ligase from Stenotrophomonas maltophilia (strain K279a).